We begin with the raw amino-acid sequence, 253 residues long: Ubiquinone biosynthesis O-methyltransferase (253 aa).

S-adenosyl-L-methionine contacts are provided by R47, G78, D99, and M141.

The protein belongs to the methyltransferase superfamily. UbiG/COQ3 family.

The catalysed reaction is a 3-demethylubiquinol + S-adenosyl-L-methionine = a ubiquinol + S-adenosyl-L-homocysteine + H(+). It carries out the reaction a 3-(all-trans-polyprenyl)benzene-1,2-diol + S-adenosyl-L-methionine = a 2-methoxy-6-(all-trans-polyprenyl)phenol + S-adenosyl-L-homocysteine + H(+). Its pathway is cofactor biosynthesis; ubiquinone biosynthesis. In terms of biological role, O-methyltransferase that catalyzes the 2 O-methylation steps in the ubiquinone biosynthetic pathway. This chain is Ubiquinone biosynthesis O-methyltransferase, found in Rhodopseudomonas palustris (strain BisA53).